The primary structure comprises 93 residues: uncharacterized protein (93 aa).

2 consecutive transmembrane segments (helical) span residues 7-27 and 70-90; these read LIFL…LGMI and ILSV…AFGI.

It localises to the cell membrane. This is an uncharacterized protein from Methanocaldococcus jannaschii (strain ATCC 43067 / DSM 2661 / JAL-1 / JCM 10045 / NBRC 100440) (Methanococcus jannaschii).